A 67-amino-acid chain; its full sequence is Large ribosomal subunit protein uL30 (67 aa).

This sequence belongs to the universal ribosomal protein uL30 family. Part of the 50S ribosomal subunit.

This Sorangium cellulosum (strain So ce56) (Polyangium cellulosum (strain So ce56)) protein is Large ribosomal subunit protein uL30.